Here is a 354-residue protein sequence, read N- to C-terminus: uncharacterized protein (354 aa).

The first 21 residues, Met1–Ala21, serve as a signal peptide directing secretion. Cys22 carries the N-palmitoyl cysteine lipid modification. Cys22 carries the S-diacylglycerol cysteine lipid modification.

The protein localises to the cell membrane. Its subcellular location is the membrane raft. This is an uncharacterized protein from Bacillus subtilis (strain 168).